The primary structure comprises 314 residues: Carbamate kinase (314 aa).

Belongs to the carbamate kinase family.

It is found in the cytoplasm. It carries out the reaction hydrogencarbonate + NH4(+) + ATP = carbamoyl phosphate + ADP + H2O + H(+). Its pathway is metabolic intermediate metabolism; carbamoyl phosphate degradation; CO(2) and NH(3) from carbamoyl phosphate: step 1/1. This chain is Carbamate kinase (arcC), found in Latilactobacillus sakei (Lactobacillus sakei).